The sequence spans 489 residues: Transmembrane protein 161A (489 aa).

A signal peptide spans 1 to 23 (MAVMGIQMVVTLLVASLMQRVSP). Residues 24–98 (HYSFGRWLLC…INTMDALVLR (75 aa)) are Extracellular-facing. N-linked (GlcNAc...) asparagine glycosylation occurs at Asn-34. The helical transmembrane segment at 99 to 119 (YFLEYQWFIDFALYSTIIYLF) threads the bilayer. The Cytoplasmic portion of the chain corresponds to 120–134 (TEAYYCVVDAQNEIN). Residues 135–155 (IGVLWCLMSIIFSIKVLFTVM) traverse the membrane as a helical segment. The Extracellular segment spans residues 156–166 (KHYFRSEEGGE). The helical transmembrane segment at 167–187 (RSVCMTFAFFFLLIAMIVTIV) threads the bilayer. Topologically, residues 188-224 (RDEYLEFGLEPGLASVCHNLENFLAQQGWQWSMPFVK) are cytoplasmic. The helical transmembrane segment at 225-245 (LAFKIALVALCAFLGGCLTFP) threads the bilayer. Over 246 to 264 (GLRLAQTHLDALKMAADRP) the chain is Extracellular. A helical transmembrane segment spans residues 265-285 (MLQLLLHMSFLPPVIVVVLWI). The Cytoplasmic segment spans residues 286 to 304 (RPITRDFLLNAPMGKESVE). Residues 305–325 (LMSNSAYNTFRLWIIVLLCLL) traverse the membrane as a helical segment. The Extracellular segment spans residues 326–370 (RFCLTRFHLQAYLCLADRWVEQMKREAGRISMLEIQRKISRIFCY). Residues 371–391 (LTVVALQYLAPVILTFHCVFM) form a helical membrane-spanning segment. Over 392–459 (LKSLGDYSWG…GLFTPLFFRG (68 aa)) the chain is Cytoplasmic. Residues 413 to 432 (VDSSPVQSHSPTSEEEEDTE) are disordered. The chain crosses the membrane as a helical span at residues 460–480 (IFSFLTWWVSVCQIITSLFGL). At 481 to 489 (YFHQYLGAS) the chain is on the extracellular side.

Belongs to the TMEM161 family.

The protein localises to the membrane. Functionally, may play a role in protection against oxidative stress. The sequence is that of Transmembrane protein 161A (tmem161a) from Xenopus laevis (African clawed frog).